The sequence spans 759 residues: Catalase-peroxidase (759 aa).

The segment at 1 to 24 is disordered; sequence MTQDKCPFKEQSSQPNFAGGGTSN. Positions 96-242 form a cross-link, tryptophyl-tyrosyl-methioninium (Trp-Tyr) (with M-268); it reads WHSAGTYRVF…LAAAHMGLIY (147 aa). The active-site Proton acceptor is His97. Residues 242 to 268 constitute a cross-link (tryptophyl-tyrosyl-methioninium (Tyr-Met) (with W-96)); it reads YVNPEGPDGNPDPVAAAHDIRDTFGRM. Residue His283 participates in heme b binding.

Belongs to the peroxidase family. Peroxidase/catalase subfamily. Homodimer or homotetramer. Requires heme b as cofactor. Formation of the three residue Trp-Tyr-Met cross-link is important for the catalase, but not the peroxidase activity of the enzyme.

The protein localises to the cytoplasm. It carries out the reaction H2O2 + AH2 = A + 2 H2O. The enzyme catalyses 2 H2O2 = O2 + 2 H2O. Bifunctional enzyme with both catalase and broad-spectrum peroxidase activity. This chain is Catalase-peroxidase, found in Aspergillus fumigatus (strain CBS 144.89 / FGSC A1163 / CEA10) (Neosartorya fumigata).